A 129-amino-acid chain; its full sequence is Protein Turandot B2 (129 aa).

Positions 1-21 (MNSATSLMCFALLLISPLCMG) are cleaved as a signal peptide.

It belongs to the Turandot family.

It localises to the secreted. Functionally, a humoral factor that may play a role in stress tolerance. In Drosophila erecta (Fruit fly), this protein is Protein Turandot B2 (TotB2).